Reading from the N-terminus, the 324-residue chain is Myb-like DNA-binding protein myb-1 (324 aa).

HTH myb-type domains lie at 4–59 and 60–110; these read MPDQ…KPGL and NHGP…NRKK. Residues 107–231 are disordered; the sequence is NRKKNQLRRQ…PTGSTLRLLT (125 aa). Residues 155–165 are compositionally biased toward polar residues; that stretch reads RRPSSPSSFND. Over residues 166–175 the composition is skewed to basic and acidic residues; sequence SLHHRVHESI. Composition is skewed to low complexity over residues 183–192 and 222–231; these read QQQQQQQQQQ and PTGSTLRLLT.

It is found in the nucleus. This Neurospora crassa (strain ATCC 24698 / 74-OR23-1A / CBS 708.71 / DSM 1257 / FGSC 987) protein is Myb-like DNA-binding protein myb-1 (rca-1).